The sequence spans 225 residues: Insulin-induced gene 2 protein (225 aa).

Topologically, residues 1–28 (MAEGETKSPGPKKCGPYISSVTSQSVNL) are cytoplasmic. Residues 29 to 51 (MIRGVVLFFIGVFLALVLNLLQI) traverse the membrane as a helical segment. Topologically, residues 52 to 70 (QRNVTLFPPDVIASIFSSA) are lumenal. Residues 71 to 88 (WWVPPCCGTASAVIGLLY) form a helical membrane-spanning segment. At 89-103 (PCIDRHLGEPHKFKR) the chain is on the cytoplasmic side. The helical transmembrane segment at 104 to 126 (EWSSVMRCVAVFVGINHASAKVD) threads the bilayer. Residues 127–129 (FDN) lie on the Lumenal side of the membrane. Residues 130-148 (NIQLSLTLAALSIGLWWTF) traverse the membrane as a helical segment. At 149 to 153 (DRSRS) the chain is on the cytoplasmic side. Ser-151 bears the Phosphoserine mark. The chain crosses the membrane as a helical span at residues 154-175 (GFGLGVGIAFLATLVTQLLVYN). The Lumenal segment spans residues 176–189 (GVYQYTSPDFLYVR). Residues 190-207 (SWLPCIFFAGGITMGNIG) form a helical membrane-spanning segment. The Cytoplasmic portion of the chain corresponds to 208–225 (RQLAMYECKVIAEKSHQE). Cys-215 bears the Cysteine sulfenic acid (-SOH); alternate mark. Cys-215 is covalently cross-linked (Glycyl cysteine thioester (Cys-Gly) (interchain with G-Cter in ubiquitin); alternate). Residues 219–225 (AEKSHQE) carry the KxHxx motif.

This sequence belongs to the INSIG family. In terms of assembly, interacts with SCAP; interaction is direct and only takes place in the presence of sterols; it prevents interaction between SCAP and the coat protein complex II (COPII). Associates with the SCAP-SREBP complex (composed of SCAP and SREBF1/SREBP1 or SREBF2/SREBP2); association is mediated via its interaction with SCAP and only takes place in the presence of sterols. Interacts with RNF139. Interacts with RNF145. Post-translationally, phosphorylation at Ser-151 by PCK1 reduces binding to oxysterol, disrupting the interaction between INSIG2 and SCAP, thereby promoting nuclear translocation of SREBP proteins (SREBF1/SREBP1 or SREBF2/SREBP2) and subsequent transcription of downstream lipogenesis-related genes. In terms of processing, polyubiquitinated by AMFR/gp78 at Cys-215 in some tissues such as adipose tissues, undifferentiated myoblasts and liver, leading to its degradation. In differentiated myotubes, Cys-215 oxidation prevents ubiquitination at the same site, resulting in protein stabilization. Oxidized at Cys-215 in differentiated myotubes, preventing ubiquitination at the same site, and resulting in protein stabilization.

Its subcellular location is the endoplasmic reticulum membrane. Its function is as follows. Oxysterol-binding protein that mediates feedback control of cholesterol synthesis by controlling both endoplasmic reticulum to Golgi transport of SCAP and degradation of HMGCR. Acts as a negative regulator of cholesterol biosynthesis by mediating the retention of the SCAP-SREBP complex in the endoplasmic reticulum, thereby blocking the processing of sterol regulatory element-binding proteins (SREBPs) SREBF1/SREBP1 and SREBF2/SREBP2. Binds oxysterol, including 22-hydroxycholesterol, 24-hydroxycholesterol, 25-hydroxycholesterol and 27-hydroxycholesterol, regulating interaction with SCAP and retention of the SCAP-SREBP complex in the endoplasmic reticulum. In presence of oxysterol, interacts with SCAP, retaining the SCAP-SREBP complex in the endoplasmic reticulum, thereby preventing SCAP from escorting SREBF1/SREBP1 and SREBF2/SREBP2 to the Golgi. Sterol deprivation or phosphorylation by PCK1 reduce oxysterol-binding, disrupting the interaction between INSIG2 and SCAP, thereby promoting Golgi transport of the SCAP-SREBP complex, followed by processing and nuclear translocation of SREBF1/SREBP1 and SREBF2/SREBP2. Also regulates cholesterol synthesis by regulating degradation of HMGCR: initiates the sterol-mediated ubiquitin-mediated endoplasmic reticulum-associated degradation (ERAD) of HMGCR via recruitment of the reductase to the ubiquitin ligase RNF139. This chain is Insulin-induced gene 2 protein, found in Sus scrofa (Pig).